Reading from the N-terminus, the 349-residue chain is Core protein VP7 (349 aa).

Asparagine 193 and asparagine 287 each carry an N-linked (GlcNAc...) asparagine; by host glycan.

This sequence belongs to the orbivirus VP7 family. As to quaternary structure, homotrimer that assemble in a complex of 260 capsomers on an inner scaffold composed of VP3.

It is found in the virion. Its function is as follows. The VP7 protein is one of the five proteins (with VP1, VP3, VP4, and VP6) which form the inner capsid of the virus. The sequence is that of Core protein VP7 (Segment-7) from Antilocapra americana (Pronghorn).